A 328-amino-acid chain; its full sequence is Glucokinase (328 aa).

16 to 21 (ADIGGT) contacts ATP.

Belongs to the bacterial glucokinase family.

The protein resides in the cytoplasm. It carries out the reaction D-glucose + ATP = D-glucose 6-phosphate + ADP + H(+). This chain is Glucokinase, found in Neisseria gonorrhoeae (strain ATCC 700825 / FA 1090).